The chain runs to 315 residues: Ribose-phosphate pyrophosphokinase (315 aa).

Residues 37–39 and 96–97 each bind ATP; these read DGE and RQ. Mg(2+) contacts are provided by H131 and D170. Residue K194 is part of the active site. D-ribose 5-phosphate contacts are provided by residues R196, D220, and 224–228; that span reads DTGGT.

This sequence belongs to the ribose-phosphate pyrophosphokinase family. Class I subfamily. As to quaternary structure, homohexamer. Requires Mg(2+) as cofactor.

It is found in the cytoplasm. The catalysed reaction is D-ribose 5-phosphate + ATP = 5-phospho-alpha-D-ribose 1-diphosphate + AMP + H(+). Its pathway is metabolic intermediate biosynthesis; 5-phospho-alpha-D-ribose 1-diphosphate biosynthesis; 5-phospho-alpha-D-ribose 1-diphosphate from D-ribose 5-phosphate (route I): step 1/1. Involved in the biosynthesis of the central metabolite phospho-alpha-D-ribosyl-1-pyrophosphate (PRPP) via the transfer of pyrophosphoryl group from ATP to 1-hydroxyl of ribose-5-phosphate (Rib-5-P). The polypeptide is Ribose-phosphate pyrophosphokinase (Escherichia coli O6:H1 (strain CFT073 / ATCC 700928 / UPEC)).